Reading from the N-terminus, the 176-residue chain is Probable inosine/xanthosine triphosphatase (176 aa).

Asp-36 serves as a coordination point for Mg(2+).

This sequence belongs to the YjjX NTPase family. In terms of assembly, homodimer. It depends on Mg(2+) as a cofactor. The cofactor is Mn(2+).

It carries out the reaction XTP + H2O = XDP + phosphate + H(+). The catalysed reaction is ITP + H2O = IDP + phosphate + H(+). Functionally, phosphatase that hydrolyzes non-canonical purine nucleotides such as XTP and ITP to their respective diphosphate derivatives. Probably excludes non-canonical purines from DNA/RNA precursor pool, thus preventing their incorporation into DNA/RNA and avoiding chromosomal lesions. This is Probable inosine/xanthosine triphosphatase from Saccharolobus islandicus (strain M.14.25 / Kamchatka #1) (Sulfolobus islandicus).